We begin with the raw amino-acid sequence, 138 residues long: MTEILRYCQGIMQRGIKESIKTLYYTGELKFGTLVGVDKVGNRYYENRQEIYGRHRWVEYGDYKSNDPTTIPPEYHSWIHHVSDKLPSEMLPFSPTYKRPHIANPTGTDGAYTPPNFLFNIEKSKEELQKEEKNDNKQ.

Positions 97–116 are disordered; sequence YKRPHIANPTGTDGAYTPPN.

It belongs to the complex I NDUFA12 subunit family. In terms of assembly, complex I is composed of 45 different subunits.

The protein localises to the mitochondrion inner membrane. Functionally, accessory subunit of the mitochondrial membrane respiratory chain NADH dehydrogenase (Complex I), that is believed not to be involved in catalysis. Complex I functions in the transfer of electrons from NADH to the respiratory chain. The immediate electron acceptor for the enzyme is believed to be ubiquinone. This is NADH dehydrogenase [ubiquinone] 1 alpha subcomplex subunit 12 (ndufa12) from Dictyostelium discoideum (Social amoeba).